A 352-amino-acid polypeptide reads, in one-letter code: DNA polymerase IV (352 aa).

A UmuC domain is found at 6-186 (IIHIDMDAFY…LPLGKIPGAG (181 aa)). Positions 10 and 104 each coordinate Mg(2+). Residue glutamate 105 is part of the active site.

This sequence belongs to the DNA polymerase type-Y family. Monomer. It depends on Mg(2+) as a cofactor.

The protein resides in the cytoplasm. It catalyses the reaction DNA(n) + a 2'-deoxyribonucleoside 5'-triphosphate = DNA(n+1) + diphosphate. Poorly processive, error-prone DNA polymerase involved in untargeted mutagenesis. Copies undamaged DNA at stalled replication forks, which arise in vivo from mismatched or misaligned primer ends. These misaligned primers can be extended by PolIV. Exhibits no 3'-5' exonuclease (proofreading) activity. May be involved in translesional synthesis, in conjunction with the beta clamp from PolIII. The protein is DNA polymerase IV of Neisseria gonorrhoeae (strain ATCC 700825 / FA 1090).